A 105-amino-acid chain; its full sequence is Circadian clock oscillator protein KaiB (105 aa).

The protein belongs to the KaiB family. The KaiABC complex composition changes during the circadian cycle to control KaiC phosphorylation. Complexes KaiC(6), KaiA(2-4):KaiC(6), KaiB(6):KaiC(6) and KaiC(6):KaiB(6):KaiA(12) are among the most important forms, many form cooperatively. Undergoes a major conformational rearrangment; in the free state forms homotetramers as a dimer of dimers. When bound to the CI domain of KaiC switches to a monomeric thioredoxin-fold (KaiB(fs)). KaiB(fs) binds CikA, leading it to dephosphorylate phospho-RpaA.

In terms of biological role, key component of the KaiABC oscillator complex, which constitutes the main circadian regulator in cyanobacteria. Complex composition changes during the circadian cycle to control KaiC phosphorylation. KaiA stimulates KaiC autophosphorylation, while KaiB sequesters KaiA, leading to KaiC autodephosphorylation. Phospho-Ser-431 KaiC accumulation triggers binding of KaiB to form the KaiB(6):KaiC(6) complex, leading to changes in output regulators CikA and SasA. KaiB switches to a thioredoxin-like fold (KaiB(fs)) when bound to KaiC. KaiB(6):KaiC(6) formation exposes a site for KaiA binding that sequesters KaiA from KaiC, making the KaiC(6):KaiB(6):KaiA(12) complex that results in KaiC autodephosphorylation. Its function is as follows. A metamorphic protein which reversibly switches between an inactive tetrameric fold and a rare, thioredoxin-like monomeric fold (KaiB(fs)). KaiB(fs) binds phospho-KaiC, KaiA and CikA. KaiA and CikA compete for binding to KaiB(fs), and KaiB(fs) and SasA compete for binding to KaiC, thus the clock oscillator and output signal pathway are tightly coupled. This is Circadian clock oscillator protein KaiB from Cyanothece sp. (strain PCC 7425 / ATCC 29141).